Here is a 363-residue protein sequence, read N- to C-terminus: Zinc phosphodiesterase ELAC protein 1 (363 aa).

Positions 62, 64, 66, 67, 182, 253, and 313 each coordinate Zn(2+). Residue aspartate 66 is the Proton acceptor of the active site.

It belongs to the RNase Z family. In terms of assembly, homodimer. The cofactor is Zn(2+).

Its subcellular location is the cytoplasm. The protein resides in the cytosol. It is found in the nucleus. It catalyses the reaction Endonucleolytic cleavage of RNA, removing extra 3' nucleotides from tRNA precursor, generating 3' termini of tRNAs. A 3'-hydroxy group is left at the tRNA terminus and a 5'-phosphoryl group is left at the trailer molecule.. Functionally, zinc phosphodiesterase, which displays some tRNA 3'-processing endonuclease activity. Specifically involved in tRNA repair: acts downstream of the ribosome-associated quality control (RQC) pathway by removing a 2',3'-cyclic phosphate from tRNAs following cleavage by ANKZF1. tRNAs are then processed by TRNT1. The protein is Zinc phosphodiesterase ELAC protein 1 (ELAC1) of Bos taurus (Bovine).